The following is a 417-amino-acid chain: 4-hydroxy-3-methylbut-2-enyl diphosphate reductase (417 aa).

C56 lines the [4Fe-4S] cluster pocket. Residue H86 coordinates (2E)-4-hydroxy-3-methylbut-2-enyl diphosphate. Residue H86 coordinates dimethylallyl diphosphate. An isopentenyl diphosphate-binding site is contributed by H86. Position 151 (C151) interacts with [4Fe-4S] cluster. H179 serves as a coordination point for (2E)-4-hydroxy-3-methylbut-2-enyl diphosphate. H179 is a binding site for dimethylallyl diphosphate. H179 is an isopentenyl diphosphate binding site. E181 (proton donor) is an active-site residue. Position 244 (T244) interacts with (2E)-4-hydroxy-3-methylbut-2-enyl diphosphate. [4Fe-4S] cluster is bound at residue C282. Residues S311, S312, N313, and S374 each contribute to the (2E)-4-hydroxy-3-methylbut-2-enyl diphosphate site. The dimethylallyl diphosphate site is built by S311, S312, N313, and S374. Isopentenyl diphosphate is bound by residues S311, S312, N313, and S374.

Belongs to the IspH family. [4Fe-4S] cluster is required as a cofactor.

The catalysed reaction is isopentenyl diphosphate + 2 oxidized [2Fe-2S]-[ferredoxin] + H2O = (2E)-4-hydroxy-3-methylbut-2-enyl diphosphate + 2 reduced [2Fe-2S]-[ferredoxin] + 2 H(+). The enzyme catalyses dimethylallyl diphosphate + 2 oxidized [2Fe-2S]-[ferredoxin] + H2O = (2E)-4-hydroxy-3-methylbut-2-enyl diphosphate + 2 reduced [2Fe-2S]-[ferredoxin] + 2 H(+). It participates in isoprenoid biosynthesis; dimethylallyl diphosphate biosynthesis; dimethylallyl diphosphate from (2E)-4-hydroxy-3-methylbutenyl diphosphate: step 1/1. The protein operates within isoprenoid biosynthesis; isopentenyl diphosphate biosynthesis via DXP pathway; isopentenyl diphosphate from 1-deoxy-D-xylulose 5-phosphate: step 6/6. In terms of biological role, catalyzes the conversion of 1-hydroxy-2-methyl-2-(E)-butenyl 4-diphosphate (HMBPP) into a mixture of isopentenyl diphosphate (IPP) and dimethylallyl diphosphate (DMAPP). Acts in the terminal step of the DOXP/MEP pathway for isoprenoid precursor biosynthesis. The chain is 4-hydroxy-3-methylbut-2-enyl diphosphate reductase from Gloeobacter violaceus (strain ATCC 29082 / PCC 7421).